Here is a 476-residue protein sequence, read N- to C-terminus: Sedoheptulokinase (476 aa).

Belongs to the FGGY kinase family.

The protein resides in the cytoplasm. The catalysed reaction is sedoheptulose + ATP = D-sedoheptulose 7-phosphate + ADP + H(+). Its function is as follows. Acts as a modulator of macrophage activation through control of glucose metabolism. The sequence is that of Sedoheptulokinase (Shpk) from Mus musculus (Mouse).